The sequence spans 375 residues: UDP-N-acetylglucosamine--N-acetylmuramyl-(pentapeptide) pyrophosphoryl-undecaprenol N-acetylglucosamine transferase (375 aa).

UDP-N-acetyl-alpha-D-glucosamine is bound by residues 13–15, N124, R165, S193, and Q294; that span reads TGG.

This sequence belongs to the glycosyltransferase 28 family. MurG subfamily.

The protein localises to the cell inner membrane. It catalyses the reaction di-trans,octa-cis-undecaprenyl diphospho-N-acetyl-alpha-D-muramoyl-L-alanyl-D-glutamyl-meso-2,6-diaminopimeloyl-D-alanyl-D-alanine + UDP-N-acetyl-alpha-D-glucosamine = di-trans,octa-cis-undecaprenyl diphospho-[N-acetyl-alpha-D-glucosaminyl-(1-&gt;4)]-N-acetyl-alpha-D-muramoyl-L-alanyl-D-glutamyl-meso-2,6-diaminopimeloyl-D-alanyl-D-alanine + UDP + H(+). It functions in the pathway cell wall biogenesis; peptidoglycan biosynthesis. In terms of biological role, cell wall formation. Catalyzes the transfer of a GlcNAc subunit on undecaprenyl-pyrophosphoryl-MurNAc-pentapeptide (lipid intermediate I) to form undecaprenyl-pyrophosphoryl-MurNAc-(pentapeptide)GlcNAc (lipid intermediate II). This is UDP-N-acetylglucosamine--N-acetylmuramyl-(pentapeptide) pyrophosphoryl-undecaprenol N-acetylglucosamine transferase from Mesorhizobium japonicum (strain LMG 29417 / CECT 9101 / MAFF 303099) (Mesorhizobium loti (strain MAFF 303099)).